Here is a 154-residue protein sequence, read N- to C-terminus: Superoxide dismutase [Cu-Zn] (154 aa).

Residues histidine 47, histidine 49, and histidine 64 each coordinate Cu cation. Residues cysteine 58 and cysteine 147 are joined by a disulfide bond. Zn(2+)-binding residues include histidine 64, histidine 72, histidine 81, and aspartate 84. Position 121 (histidine 121) interacts with Cu cation. A substrate-binding site is contributed by arginine 144.

The protein belongs to the Cu-Zn superoxide dismutase family. In terms of assembly, homodimer. Cu cation is required as a cofactor. It depends on Zn(2+) as a cofactor.

The protein resides in the cytoplasm. The catalysed reaction is 2 superoxide + 2 H(+) = H2O2 + O2. In terms of biological role, destroys radicals which are normally produced within the cells and which are toxic to biological systems. The protein is Superoxide dismutase [Cu-Zn] (sod1) of Schizosaccharomyces pombe (strain 972 / ATCC 24843) (Fission yeast).